Consider the following 213-residue polypeptide: Superoxide dismutase [Fe] (213 aa).

Residues His-26, His-73, Asp-156, and His-160 each coordinate Fe cation.

This sequence belongs to the iron/manganese superoxide dismutase family. As to quaternary structure, homodimer. Fe cation serves as cofactor.

The catalysed reaction is 2 superoxide + 2 H(+) = H2O2 + O2. Functionally, destroys superoxide anion radicals which are normally produced within the cells and which are toxic to biological systems. This Helicobacter pylori (strain ATCC 700392 / 26695) (Campylobacter pylori) protein is Superoxide dismutase [Fe] (sodB).